The following is an 83-amino-acid chain: SPPVCGNELLEEGEECDCDSPANCQDRCCNAATCKLTPGSQCNYGECCDQCKFKKARTVCRIARGDWNDDYCTGKSSDCPWNH.

A Disintegrin domain is found at 2–83 (PPVCGNELLE…GKSSDCPWNH (82 aa)). 7 cysteine pairs are disulfide-bonded: Cys5-Cys24, Cys16-Cys34, Cys18-Cys29, Cys28-Cys51, Cys42-Cys48, Cys47-Cys72, and Cys60-Cys79. The Cell attachment site signature appears at 64 to 66 (RGD).

This sequence belongs to the venom metalloproteinase (M12B) family. P-II subfamily. P-IIa sub-subfamily. As to quaternary structure, monomer (disintegrin). In terms of tissue distribution, expressed by the venom gland.

The protein localises to the secreted. Its function is as follows. Inhibits fibrinogen interaction with platelets. Acts by binding to the alpha-IIb/beta-3 (ITGA2B/ITGB3) on the platelet surface and inhibits aggregation induced by ADP, thrombin, platelet-activating factor and collagen. This is Disintegrin isoform D-2 from Bitis arietans (African puff adder).